Reading from the N-terminus, the 579-residue chain is MRKFDQQQIEQILKKRFFITQSAYIYGGVSGLYDLGPPGLSIKTNILSLWRKHFVLEEDMLEIETTTMLPHDVLKASGHVDKFCDILVFDEVSGDCFRADHLVGDALEKMSPTEEISKELQKVDCMSCQEIDEIISKYNIRSTLGNKLSKSQQFNLMFGTQIGYKGGQTMFLRPETAQGQFLNFKKLCEYNNDKLPFASASIGKAYRNEISPRSGLLRVREFDQAEIEHFVLTDEKDHPKFSTVQGIKLKLMHHDASEEITLKEAIERGIVCNETMGYYIGRTALFLIELGIDRELLRFRQHKKDEMAHYAKGCWDAEIYTSYGWIECVGIADRACYDLSCHEDGSKVDLRCKRRLAEPKEIEEWVLKLDKKEWGAKLRDRFSVLMETVNGLSQKYIEKNVVSIGENRNRLSVKFDEYTINIECSRVKKKVFVENVIPDVIEPSFGIGRILYALIEHSFYLREDSRPVFRFKPAIAPVQCAIGYLIHFDEFNEHILNIKRFLTDNGLVVHVNERSCSIGRKYSSCDELGIPFFITFDPDFLKDRMVTIRERDSMQQIRVDVEKCPSIVLEYIRGQSRWN.

Glu-175 is a glycine binding site. ATP-binding positions include 207-209 (RNE) and 218-219 (RV). Position 226 (Glu-226) interacts with glycine. 327 to 328 (EC) provides a ligand contact to ATP. Residue 442 to 444 (EPS) coordinates glycine. Position 449 (Arg-449) interacts with ATP.

This sequence belongs to the class-II aminoacyl-tRNA synthetase family. Homodimer.

It catalyses the reaction tRNA(Gly) + glycine + ATP = glycyl-tRNA(Gly) + AMP + diphosphate. The catalysed reaction is 2 ATP + H(+) = P(1),P(4)-bis(5'-adenosyl) tetraphosphate + diphosphate. In terms of biological role, catalyzes the ATP-dependent ligation of glycine to the 3'-end of its cognate tRNA, via the formation of an aminoacyl-adenylate intermediate (Gly-AMP). Also produces diadenosine tetraphosphate (Ap4A), a universal pleiotropic signaling molecule needed for cell regulation pathways, by direct condensation of 2 ATPs. Thereby, may play a special role in Ap4A homeostasis. This chain is Glycine--tRNA ligase, found in Encephalitozoon cuniculi (strain GB-M1) (Microsporidian parasite).